The sequence spans 231 residues: 2-C-methyl-D-erythritol 4-phosphate cytidylyltransferase (231 aa).

Belongs to the IspD/TarI cytidylyltransferase family. IspD subfamily.

The enzyme catalyses 2-C-methyl-D-erythritol 4-phosphate + CTP + H(+) = 4-CDP-2-C-methyl-D-erythritol + diphosphate. The protein operates within isoprenoid biosynthesis; isopentenyl diphosphate biosynthesis via DXP pathway; isopentenyl diphosphate from 1-deoxy-D-xylulose 5-phosphate: step 2/6. Its function is as follows. Catalyzes the formation of 4-diphosphocytidyl-2-C-methyl-D-erythritol from CTP and 2-C-methyl-D-erythritol 4-phosphate (MEP). In Rubrobacter xylanophilus (strain DSM 9941 / JCM 11954 / NBRC 16129 / PRD-1), this protein is 2-C-methyl-D-erythritol 4-phosphate cytidylyltransferase.